The primary structure comprises 522 residues: Serine/threonine protein phosphatase 2A 59 kDa regulatory subunit B' gamma isoform (522 aa).

A disordered region spans residues 1–74 (MIKQIFGKLP…SSTSSNRTNQ (74 aa)). Low complexity predominate over residues 35 to 58 (PNSGISSISKPSSKSSASNSNGAN). Residues 63 to 74 (APSSTSSNRTNQ) show a composition bias toward polar residues.

Belongs to the phosphatase 2A regulatory subunit B56 family. PP2A consists of a common heteromeric enzyme, composed of a catalytic subunit (subunits C), a constant regulatory subunit (subunit A), and a variety of regulatory subunits such as subunits B (the R2/B/PR55/B55, R3/B''/PR72/PR130/PR59 and R5/B'/B56 families). Interacts with BRI1. Interacts with IGMT1 and IGMT4. Interacts with ACO3 in the cytosol. Expressed ubiquitously at low levels. Expressed in roots, emerging lateral roots, cotyledons, leaves, floral stalks and flowers.

The protein localises to the cytoplasm. Its subcellular location is the cytosol. It is found in the nucleus. The B regulatory subunit may modulate substrate selectivity and catalytic activity, and may also direct the localization of the catalytic enzyme to a particular subcellular compartment. Required for the formation of the PP2A holoenzyme that negatively regulates brassinosteroid signaling by dephosphorylating and inactivating BRI1 in the cytoplasm. Seems to be functionally connected with CPR5 and may mediate the negative regulation of defense reactions and senescence under low irradiances. May contribute to the epigenetic regulation of defense gene expression. Involved in the control of methoxylation of indole glucosinolates and formation of 4-methoxy- indol-3-yl-methyl glucosinolate in leaves, through direct interaction with indole glucosinolate methyltransferases. Involved in growth regulation and stress signaling. Involved in the regulation of reactive oxygen species (ROS) signaling and maintenance of cellular ROS homeostasis. Required to control the level of ACO3 phosphorylation in the cytoplasm. Regulates hydrogen peroxide metabolism by controlling the abundance of AOX1A and AXO3/AOX1D in leaf mitochondria. May mediate dephosphorylation of CRT1 and promote the degradation of unfolded proteins in endoplasmic reticulum (ER). Involved in the regulation of flowering time by repressing FLC, the main flowering repressor gene. The chain is Serine/threonine protein phosphatase 2A 59 kDa regulatory subunit B' gamma isoform (B'GAMMA) from Arabidopsis thaliana (Mouse-ear cress).